Consider the following 2371-residue polypeptide: NBAS subunit of NRZ tethering complex (2371 aa).

Positions 1 to 1035 (MAAPESGPAL…KTEATTKLHD (1035 aa)) are interaction with USE1. WD repeat units lie at residues 130–169 (DPKP…LFVI) and 316–355 (QEQD…QQGE). Phosphoserine occurs at positions 473 and 475. An interaction with ZW10 and RINT1 region spans residues 1036–2371 (MVDQLEQILS…TALRAAQHWV (1336 aa)). At K1057 the chain carries N6-acetyllysine.

Component of the NRZ complex composed of NBAS, ZW10 and RINT1/TIP20L; NRZ associates with SNAREs STX18, USE1, BNIP1/SEC20L and SEC22B (the assembly has been described as syntaxin 18 complex); links NRZ to SNARE USE1. As to expression, broadly expressed, with highest levels in heart and skeletal muscle, and lowest levels in liver, small intestine and thymus. Well expressed in retinal ganglion cells, epidermal skin cells, and leukocytes. Up-regulated together with N-myc in some neuroblastoma cell lines.

Its subcellular location is the cytoplasm. The protein resides in the endoplasmic reticulum. It is found in the endoplasmic reticulum membrane. In terms of biological role, involved in Golgi-to-endoplasmic reticulum (ER) retrograde transport; the function is proposed to depend on its association in the NRZ complex which is believed to play a role in SNARE assembly at the ER. Required for normal embryonic development. May play a role in the nonsense-mediated decay pathway of mRNAs containing premature stop codons. The chain is NBAS subunit of NRZ tethering complex from Homo sapiens (Human).